A 68-amino-acid chain; its full sequence is UPF0434 protein BMA10229_A1047 (68 aa).

This sequence belongs to the UPF0434 family.

The protein is UPF0434 protein BMA10229_A1047 of Burkholderia mallei (strain NCTC 10229).